Consider the following 650-residue polypeptide: Putative lipase atg15 (650 aa).

The Cytoplasmic portion of the chain corresponds to 1–11 (MKSSRKRTKRR). A helical; Signal-anchor for type II membrane protein membrane pass occupies residues 12–32 (VLQDMSISGLLLSVALLPSVV). At 33-650 (SAQDHVYLDP…CVGSTGTELR (618 aa)) the chain is on the lumenal side. Residues Asn165, Asn200, Asn222, Asn280, and Asn304 are each glycosylated (N-linked (GlcNAc...) asparagine). Ser320 functions as the Charge relay system in the catalytic mechanism. Asn466 carries an N-linked (GlcNAc...) asparagine glycan.

The protein belongs to the AB hydrolase superfamily. Lipase family. As to quaternary structure, binds to both phosphatidylinositol (PI) and phosphatidylinositol 3,5-bisphosphate (PIP2).

The protein localises to the endosome. It localises to the multivesicular body membrane. The protein resides in the prevacuolar compartment membrane. It catalyses the reaction a triacylglycerol + H2O = a diacylglycerol + a fatty acid + H(+). Its function is as follows. Lipase which is essential for lysis of subvacuolar cytoplasm to vacuole targeted bodies and intravacuolar autophagic bodies. Involved in the lysis of intravacuolar multivesicular body (MVB) vesicles. The intravacuolar membrane disintegration by atg15 is critical to life span extension. The chain is Putative lipase atg15 (atg15) from Aspergillus fumigatus (strain ATCC MYA-4609 / CBS 101355 / FGSC A1100 / Af293) (Neosartorya fumigata).